The chain runs to 326 residues: Microtubule-associated protein RP/EB family member 2 (326 aa).

Ser-9 is modified (phosphoserine). Residues 56 to 158 (TMSRHDIIAW…FIQWFKKFYD (103 aa)) form the Calponin-homology (CH) domain. The residue at position 166 (Tyr-166) is a Phosphotyrosine. Disordered stretches follow at residues 170–239 (EARQ…DKDL) and 297–326 (YASDEQEGQTEEPEVEEQTHDQQPQQQEEY). The interval 186 to 326 (QIFNLPKKSH…DQQPQQQEEY (141 aa)) is DCTN1-binding. The span at 199–233 (SPTAGAAKSSPAAKPGSTPSRPSSAKRASSSGSAS) shows a compositional bias: low complexity. Phosphoserine is present on residues Ser-218 and Ser-235. An EB1 C-terminal domain is found at 235 to 305 (SDKDLETQVI…LYASDEQEGQ (71 aa)). Residues 258 to 301 (EGVEKERDFYFGKLREIELLCQEHGQENDDLVQRLMEVLYASDE) are APC-binding. Residues 300–312 (DEQEGQTEEPEVE) are compositionally biased toward acidic residues. Over residues 317-326 (DQQPQQQEEY) the composition is skewed to low complexity.

Belongs to the MAPRE family. As to quaternary structure, interacts with DCTN1. Interacts with APC (via C-terminal). Interacts with monomeric and polymerized tubulin. Interacts with SLAIN1. Interacts (via the N-terminal region) with BAG1. Interacts with ASB14. Interacts with HAX1; this interaction is essential for epidermal cell migration. Post-translationally, phosphorylated at Ser-235 by CK2 leading to enhanced cell adhesion. Phosphorylated by CDK1 and AURKB during mitosis reduces the binding affinity of MAPRE2 for microtubules. Ubiquitinated in an ASB14-dependent manner; leading to proteasomal degradation.

It is found in the cytoplasm. Its subcellular location is the cytoskeleton. Its function is as follows. Adapter protein that is involved in microtubule polymerization, and spindle function by stabilizing microtubules and anchoring them at centrosomes. Therefore, ensures mitotic progression and genome stability. Acts as a central regulator of microtubule reorganization in apico-basal epithelial differentiation. Plays a role during oocyte meiosis by regulating microtubule dynamics. Participates in neurite growth by interacting with plexin B3/PLXNB3 and microtubule reorganization during apico-basal epithelial differentiation. Also plays an essential role for cell migration and focal adhesion dynamics. Mechanistically, recruits HAX1 to microtubules in order to regulate focal adhesion dynamics. The chain is Microtubule-associated protein RP/EB family member 2 (Mapre2) from Rattus norvegicus (Rat).